The chain runs to 652 residues: Phosphomethylpyrimidine synthase (652 aa).

Substrate-binding positions include Asn235, Met264, Tyr293, His329, Ser349–Gly351, Asp390–Arg393, and Glu429. His433 lines the Zn(2+) pocket. Residue Tyr456 participates in substrate binding. His497 provides a ligand contact to Zn(2+). [4Fe-4S] cluster-binding residues include Cys577, Cys580, and Cys585.

It belongs to the ThiC family. In terms of assembly, homodimer. Requires [4Fe-4S] cluster as cofactor.

The enzyme catalyses 5-amino-1-(5-phospho-beta-D-ribosyl)imidazole + S-adenosyl-L-methionine = 4-amino-2-methyl-5-(phosphooxymethyl)pyrimidine + CO + 5'-deoxyadenosine + formate + L-methionine + 3 H(+). It functions in the pathway cofactor biosynthesis; thiamine diphosphate biosynthesis. Functionally, catalyzes the synthesis of the hydroxymethylpyrimidine phosphate (HMP-P) moiety of thiamine from aminoimidazole ribotide (AIR) in a radical S-adenosyl-L-methionine (SAM)-dependent reaction. In Shewanella woodyi (strain ATCC 51908 / MS32), this protein is Phosphomethylpyrimidine synthase.